The following is a 334-amino-acid chain: Protein-methionine-sulfoxide reductase catalytic subunit MsrP (334 aa).

Residues 1–44 (MKAVNPLTENDVTPESLFNARRRTVLKMLGMSAAALSLPGAARA) constitute a signal peptide (tat-type signal). Residues asparagine 88, 91–92 (YE), cysteine 146, threonine 181, asparagine 233, arginine 238, and 249–251 (GIK) contribute to the Mo-molybdopterin site.

Belongs to the MsrP family. Heterodimer of a catalytic subunit (MsrP) and a heme-binding subunit (MsrQ). The cofactor is Mo-molybdopterin. In terms of processing, predicted to be exported by the Tat system. The position of the signal peptide cleavage has not been experimentally proven.

The protein localises to the periplasm. It catalyses the reaction L-methionyl-[protein] + a quinone + H2O = L-methionyl-(S)-S-oxide-[protein] + a quinol. It carries out the reaction L-methionyl-[protein] + a quinone + H2O = L-methionyl-(R)-S-oxide-[protein] + a quinol. Its function is as follows. Part of the MsrPQ system that repairs oxidized periplasmic proteins containing methionine sulfoxide residues (Met-O), using respiratory chain electrons. Thus protects these proteins from oxidative-stress damage caused by reactive species of oxygen and chlorine generated by the host defense mechanisms. MsrPQ is essential for the maintenance of envelope integrity under bleach stress, rescuing a wide series of structurally unrelated periplasmic proteins from methionine oxidation. The catalytic subunit MsrP is non-stereospecific, being able to reduce both (R-) and (S-) diastereoisomers of methionine sulfoxide. The chain is Protein-methionine-sulfoxide reductase catalytic subunit MsrP from Erwinia tasmaniensis (strain DSM 17950 / CFBP 7177 / CIP 109463 / NCPPB 4357 / Et1/99).